The chain runs to 599 residues: DNA-directed RNA polymerase III subunit RPC3 (599 aa).

Positions 350–375 are disordered; that stretch reads PKKRSASNGDDERPTKKIKTEDSDDI. Basic and acidic residues predominate over residues 359-370; that stretch reads DDERPTKKIKTE. A leucine-zipper region spans residues 528–549; the sequence is LIFSMAEILSNIQAFREDHKIL.

This sequence belongs to the RNA polymerase beta chain family. As to quaternary structure, component of the RNA polymerase III (Pol III) complex consisting of 17 subunits.

It localises to the nucleus. Functionally, DNA-dependent RNA polymerase catalyzes the transcription of DNA into RNA using the four ribonucleoside triphosphates as substrates. Specific core component of RNA polymerase III which synthesizes small RNAs, such as 5S rRNA and tRNAs. In Scheffersomyces stipitis (strain ATCC 58785 / CBS 6054 / NBRC 10063 / NRRL Y-11545) (Yeast), this protein is DNA-directed RNA polymerase III subunit RPC3 (RPC82).